We begin with the raw amino-acid sequence, 158 residues long: Protein EOLA1 (158 aa).

An ASCH domain is found at 6 to 92; sequence LSFRQPYAGF…IAGLVDIGET (87 aa).

This sequence belongs to the EOLA family. In terms of assembly, interacts with MT2A. Expressed primarily in heart, skeletal muscle, kidney, liver and placenta. Relatively high level of expression in spleen, colon and small intestine. Almost no expression in brain, thymus, lung and peripheral blood leukocytes. Expressed in epithelial cells (at protein level).

In terms of biological role, may play a role in cell protection during the inflammatory response. In epithelial cells, negatively regulates IL6 production and apoptosis through the regulation of MT2A expression. The polypeptide is Protein EOLA1 (Homo sapiens (Human)).